The primary structure comprises 65 residues: Ferredoxin soy (65 aa).

Positions 2–29 (GVQVDKERCVGAGMCALTAPDVFTQDDD) constitute a 4Fe-4S ferredoxin-type domain. Positions 10, 16, and 55 each coordinate [3Fe-4S] cluster.

It depends on [3Fe-4S] cluster as a cofactor.

Electron transport protein for the cytochrome P-450-SOY system. The chain is Ferredoxin soy (soyB) from Streptomyces griseus.